The following is a 319-amino-acid chain: Chromoplast-specific carotenoid-associated protein C2, chromoplastic (319 aa).

The transit peptide at 1–55 directs the protein to the chromoplast; the sequence is MTSIAFCNAFTVNPFLAAARRSPPPLTPLTSVALSPARKPRILAIFHPRTFPSFR.

The protein belongs to the PAP/fibrillin family.

The protein resides in the plastid. Its subcellular location is the chromoplast. Functionally, may be involved in carotenoid sequestration within chromoplasts. The polypeptide is Chromoplast-specific carotenoid-associated protein C2, chromoplastic (CHRC2) (Oncidium hybrid cultivar (Orchid)).